A 139-amino-acid chain; its full sequence is ATP synthase epsilon chain 2 (139 aa).

The protein belongs to the ATPase epsilon chain family. As to quaternary structure, F-type ATPases have 2 components, CF(1) - the catalytic core - and CF(0) - the membrane proton channel. CF(1) has five subunits: alpha(3), beta(3), gamma(1), delta(1), epsilon(1). CF(0) has three main subunits: a, b and c.

The protein localises to the cell inner membrane. Functionally, produces ATP from ADP in the presence of a proton gradient across the membrane. This Ralstonia nicotianae (strain ATCC BAA-1114 / GMI1000) (Ralstonia solanacearum) protein is ATP synthase epsilon chain 2 (atpC2).